Consider the following 428-residue polypeptide: Spliceosome RNA helicase DDX39B (428 aa).

The segment covering 1–19 (MAENDVDNELLDYEDDEVE) has biased composition (acidic residues). The tract at residues 1 to 31 (MAENDVDNELLDYEDDEVETAAGGDGAEAPA) is disordered. Ala-2 is subject to N-acetylalanine. Lys-36 bears the N6-acetyllysine; alternate mark. Lys-36 is covalently cross-linked (Glycyl lysine isopeptide (Lys-Gly) (interchain with G-Cter in SUMO2); alternate). 2 positions are modified to phosphoserine: Ser-38 and Ser-41. Positions 45 to 73 (SGFRDFLLKPELLRAIVDCGFEHPSEVQH) match the Q motif motif. The region spanning 76–249 (IPQAILGMDV…RKFMQDPMEI (174 aa)) is the Helicase ATP-binding domain. 89-96 (AKSGMGKT) is an ATP binding site. Thr-172 is modified (phosphothreonine). A DECD box motif is present at residues 196–199 (DECD). The Helicase C-terminal domain occupies 261–422 (GLQQYYVKLK…ELPDEIDISS (162 aa)).

It belongs to the DEAD box helicase family. DECD subfamily. In terms of assembly, homodimer, and heterodimer with DDX39A. DDX39B interacts with the THO subcomplex to form the THO-DDX39B complex which multimerizes into a 28-subunit tetrameric assembly. Component of the transcription/export (TREX) complex at least composed of ALYREF/THOC4, DDX39B, SARNP/CIP29, CHTOP and the THO subcomplex; in the complex interacts with THOC2. THOC1-THOC2-THOC3-DDX39B subcomplex is sufficient for the interaction with export factor NXF1-NXT1. TREX seems to have a dynamic structure involving ATP-dependent remodeling. Within the TREX complex bridges ALYREF/THOC4 and the THO subcomplex, and, in a ATP-dependent manner, ALYREF/THOC4 and SARNP/CIP29. Component of the spliceosome. Interacts directly with U2AF2. Interacts with RBM8A, RNPS1 and SRRM1, FYTTD1/UIF, THOC1, MX1 and POLDIP3. Interacts with LUZP4. Interacts with SARNP/CIP29 (via the C-terminal domain); the interaction is direct and facilitates RNA binding of DDX39B. As to quaternary structure, (Microbial infection) Interacts with human cytomegalovirus/HHV-5 protein UL69.

Its subcellular location is the nucleus. It localises to the nucleus speckle. The protein resides in the cytoplasm. The enzyme catalyses ATP + H2O = ADP + phosphate + H(+). Its function is as follows. Involved in nuclear export of spliced and unspliced mRNA. Component of the TREX complex which is thought to couple mRNA transcription, processing and nuclear export, and specifically associates with spliced mRNA and not with unspliced pre-mRNA. The TREX complex is recruited to spliced mRNAs by a transcription-independent mechanism, binds to mRNA upstream of the exon-junction complex (EJC) and is recruited in a splicing- and cap-dependent manner to a region near the 5' end of the mRNA where it functions in mRNA export to the cytoplasm via the TAP/NXF1 pathway. The THOC1-THOC2-THOC3 core complex alone is sufficient to promote ATPase activity of DDX39B; in the complex THOC2 is the only component that directly interacts with DDX39B. Associates with SARNP/CIP29, which facilitates RNA binding of DDX39B and likely plays a role in mRNA export. May undergo several rounds of ATP hydrolysis during assembly of TREX to drive subsequent loading of components such as ALYREF/THOC4 and CHTOP onto mRNA. Also associates with pre-mRNA independent of ALYREF/THOC4. Involved in the nuclear export of intronless mRNA; the ATP-bound form is proposed to recruit export adapter ALYREF/THOC4 to intronless mRNA; its ATPase activity is cooperatively stimulated by RNA and ALYREF/THOC4 and ATP hydrolysis is thought to trigger the dissociation from RNA to allow the association of ALYREF/THOC4 and the NXF1-NXT1 heterodimer. Involved in transcription elongation and genome stability. Splice factor that is required for the first ATP-dependent step in spliceosome assembly and for the interaction of U2 snRNP with the branchpoint. Has both RNA-stimulated ATP binding/hydrolysis activity and ATP-dependent RNA unwinding activity. Even with the stimulation of RNA, the ATPase activity is weak. Can only hydrolyze ATP but not other NTPs. The RNA stimulation of ATPase activity does not have a strong preference for the sequence and length of the RNA. However, ssRNA stimulates the ATPase activity much more strongly than dsRNA. Can unwind 5' or 3' overhangs or blunt end RNA duplexes in vitro. The ATPase and helicase activities are not influenced by U2AF2; the effect of ALYREF/THOC4 is reported conflictingly with [PubMed:23299939] reporting a stimulatory effect. In terms of biological role, (Microbial infection) The TREX complex is essential for the export of Kaposi's sarcoma-associated herpesvirus (KSHV) intronless mRNAs and infectious virus production. This Homo sapiens (Human) protein is Spliceosome RNA helicase DDX39B.